The chain runs to 23 residues: Acetylcholine receptor subunit gamma (23 aa).

It belongs to the ligand-gated ion channel (TC 1.A.9) family. Acetylcholine receptor (TC 1.A.9.1) subfamily. Gamma/CHRNG sub-subfamily. As to quaternary structure, pentamer of two alpha chains, and one each of the beta, delta, and gamma chains.

It is found in the postsynaptic cell membrane. The protein localises to the cell membrane. It catalyses the reaction K(+)(in) = K(+)(out). It carries out the reaction Na(+)(in) = Na(+)(out). Its function is as follows. After binding acetylcholine, the AChR responds by an extensive change in conformation that affects all subunits and leads to opening of an ion-conducting channel across the plasma membrane. This chain is Acetylcholine receptor subunit gamma (chrng), found in Electrophorus electricus (Electric eel).